We begin with the raw amino-acid sequence, 117 residues long: Large ribosomal subunit protein bL20c (117 aa).

The protein belongs to the bacterial ribosomal protein bL20 family.

The protein resides in the plastid. It is found in the chloroplast. Functionally, binds directly to 23S ribosomal RNA and is necessary for the in vitro assembly process of the 50S ribosomal subunit. It is not involved in the protein synthesizing functions of that subunit. In Lobularia maritima (Sweet alyssum), this protein is Large ribosomal subunit protein bL20c.